Reading from the N-terminus, the 1184-residue chain is Non-receptor tyrosine-protein kinase TYK2 (1184 aa).

The FERM domain occupies 33-430 (LMVLLHWPGP…GYFRLTADSS (398 aa)). Residues 294 to 368 (CYIQNSGQTA…KAGEHLTESP (75 aa)) form a disordered region. At Y295 the chain carries Phosphotyrosine. The 81-residue stretch at 449–529 (GIHGPLMDPF…GRSFASLGDL (81 aa)) folds into the SH2; atypical domain. Position 525 is a phosphoserine (S525). The 278-residue stretch at 589 to 866 (ITQLSHLGQG…RTILRDLTRL (278 aa)) folds into the Protein kinase 1 domain. Y604 is subject to Phosphotyrosine. S881 carries the phosphoserine modification. A Protein kinase 2 domain is found at 894–1166 (LKKIRDLGEG…PTFQNLVPIL (273 aa)). Residues 900–908 (LGEGHFGKV) and K927 each bind ATP. Residue D1020 is the Proton acceptor of the active site. Phosphotyrosine; by autocatalysis is present on Y1051. Y1052 carries the post-translational modification Phosphotyrosine.

Belongs to the protein kinase superfamily. Tyr protein kinase family. JAK subfamily. As to quaternary structure, interacts (via FERM domain) with JAKMIP1. Interacts with PIK3R1; this interaction is important for cell migration. Interacts with MPL/TPOR. Post-translationally, phosphorylation by JAK1 at Tyr-1051 and Tyr-1052 induces kinase activation.

It catalyses the reaction L-tyrosyl-[protein] + ATP = O-phospho-L-tyrosyl-[protein] + ADP + H(+). With respect to regulation, the protein kinase 1 domain (also termed pseudokinase domain) mediates autoinhibition of the TYK2 kinase domain. Functionally, tyrosine kinase of the non-receptor type involved in numerous cytokines and interferons signaling, which regulates cell growth, development, cell migration, innate and adaptive immunity. Plays both structural and catalytic roles in numerous interleukins and interferons (IFN-alpha/beta) signaling. Associates with heterodimeric cytokine receptor complexes and activates STAT family members including STAT1, STAT3, STAT4 or STAT6. The heterodimeric cytokine receptor complexes are composed of (1) a TYK2-associated receptor chain (IFNAR1, IL12RB1, IL10RB or IL13RA1), and (2) a second receptor chain associated either with JAK1 or JAK2. In response to cytokine-binding to receptors, phosphorylates and activates receptors (IFNAR1, IL12RB1, IL10RB or IL13RA1), creating docking sites for STAT members. In turn, recruited STATs are phosphorylated by TYK2 (or JAK1/JAK2 on the second receptor chain), form homo- and heterodimers, translocate to the nucleus, and regulate cytokine/growth factor responsive genes. Negatively regulates STAT3 activity by promototing phosphorylation at a specific tyrosine that differs from the site used for signaling. The sequence is that of Non-receptor tyrosine-protein kinase TYK2 from Mus musculus (Mouse).